The following is a 334-amino-acid chain: L-lactate dehydrogenase B chain (334 aa).

Residue Ala-2 is modified to N-acetylalanine. Lys-7 is modified (N6-acetyllysine). 31 to 53 (QVGMACAISILGKSLADELALVD) is a binding site for NAD(+). Ser-44 bears the Phosphoserine mark. An N6-acetyllysine modification is found at Lys-58. Arg-100 is a binding site for NAD(+). Arg-107 contributes to the substrate binding site. Lys-119 carries the N6-acetyllysine modification. Asn-139 is a binding site for NAD(+). Positions 139 and 170 each coordinate substrate. The Proton acceptor role is filled by His-194. Phosphotyrosine is present on Tyr-240. A substrate-binding site is contributed by Thr-249. The residue at position 329 (Lys-329) is an N6-acetyllysine.

The protein belongs to the LDH/MDH superfamily. LDH family. In terms of assembly, homotetramer. Interacts with PTEN upstream reading frame protein MP31; the interaction leads to inhibition of mitochondrial lactate dehydrogenase activity, preventing conversion of lactate to pyruvate in mitochondria. In terms of tissue distribution, predominantly expressed in aerobic tissues such as cardiac muscle.

It is found in the cytoplasm. Its subcellular location is the mitochondrion inner membrane. The catalysed reaction is (S)-lactate + NAD(+) = pyruvate + NADH + H(+). Its pathway is fermentation; pyruvate fermentation to lactate; (S)-lactate from pyruvate: step 1/1. Its function is as follows. Interconverts simultaneously and stereospecifically pyruvate and lactate with concomitant interconversion of NADH and NAD(+). This Homo sapiens (Human) protein is L-lactate dehydrogenase B chain (LDHB).